The following is a 349-amino-acid chain: Twinfilin-2-B (349 aa).

2 consecutive ADF-H domains span residues 4-139 (QTGI…KHVS) and 177-313 (GLSF…DEVH). The disordered stretch occupies residues 321–349 (QAFAKPKGPAGKRGQKRLIKGPGENGEDS).

The protein belongs to the actin-binding proteins ADF family. Twinfilin subfamily. Interacts with G-actin; ADP-actin form and capping protein (CP).

The protein resides in the cytoplasm. Its subcellular location is the cytoskeleton. It localises to the perinuclear region. Functionally, actin-binding protein involved in motile and morphological processes. Inhibits actin polymerization, likely by sequestering G-actin. The chain is Twinfilin-2-B (twf2-b) from Xenopus laevis (African clawed frog).